A 398-amino-acid polypeptide reads, in one-letter code: S-adenosylmethionine synthase 2 (398 aa).

His-16 serves as a coordination point for ATP. Position 18 (Asp-18) interacts with Mg(2+). Glu-51 contributes to the K(+) binding site. Residues Glu-64 and Gln-108 each coordinate L-methionine. Residues 108–118 (QSADIAQGVDA) form a flexible loop region. ATP is bound by residues 176–178 (DSK), 242–243 (KF), Asp-251, 257–258 (RK), Ala-274, and Lys-278. Residue Asp-251 participates in L-methionine binding. Residue Lys-282 coordinates L-methionine.

It belongs to the AdoMet synthase family. In terms of assembly, homotetramer; dimer of dimers. The cofactor is Mg(2+). K(+) serves as cofactor.

It localises to the cytoplasm. It catalyses the reaction L-methionine + ATP + H2O = S-adenosyl-L-methionine + phosphate + diphosphate. The protein operates within amino-acid biosynthesis; S-adenosyl-L-methionine biosynthesis; S-adenosyl-L-methionine from L-methionine: step 1/1. Catalyzes the formation of S-adenosylmethionine (AdoMet) from methionine and ATP. The overall synthetic reaction is composed of two sequential steps, AdoMet formation and the subsequent tripolyphosphate hydrolysis which occurs prior to release of AdoMet from the enzyme. The protein is S-adenosylmethionine synthase 2 of Rhodopseudomonas palustris (strain BisB18).